A 514-amino-acid chain; its full sequence is uncharacterized protein (514 aa).

Disordered stretches follow at residues 1 to 68, 109 to 244, and 272 to 484; these read MSSP…SESE, VPPP…RQAS, and RPAV…AQGC. A compositionally biased stretch (basic residues) spans 368 to 384; sequence KPQKPKHSSPGKKPAGR. Basic and acidic residues predominate over residues 385 to 405; the sequence is KTRESQAAAREDNDPNRDEVP.

This is an uncharacterized protein from Homo sapiens (Human).